We begin with the raw amino-acid sequence, 184 residues long: Peptide deformylase (184 aa).

The Fe cation site is built by cysteine 98 and histidine 140. Glutamate 141 is an active-site residue. Histidine 144 contacts Fe cation.

This sequence belongs to the polypeptide deformylase family. Fe(2+) is required as a cofactor.

The catalysed reaction is N-terminal N-formyl-L-methionyl-[peptide] + H2O = N-terminal L-methionyl-[peptide] + formate. Removes the formyl group from the N-terminal Met of newly synthesized proteins. Requires at least a dipeptide for an efficient rate of reaction. N-terminal L-methionine is a prerequisite for activity but the enzyme has broad specificity at other positions. The polypeptide is Peptide deformylase (Phocaeicola vulgatus (strain ATCC 8482 / DSM 1447 / JCM 5826 / CCUG 4940 / NBRC 14291 / NCTC 11154) (Bacteroides vulgatus)).